The chain runs to 295 residues: Ribosomal RNA small subunit methyltransferase H (295 aa).

S-adenosyl-L-methionine is bound by residues 36–38 (GGH), Asp-56, Leu-90, Asp-104, and His-111.

It belongs to the methyltransferase superfamily. RsmH family.

It is found in the cytoplasm. The enzyme catalyses cytidine(1402) in 16S rRNA + S-adenosyl-L-methionine = N(4)-methylcytidine(1402) in 16S rRNA + S-adenosyl-L-homocysteine + H(+). Its function is as follows. Specifically methylates the N4 position of cytidine in position 1402 (C1402) of 16S rRNA. The protein is Ribosomal RNA small subunit methyltransferase H of Dictyoglomus turgidum (strain DSM 6724 / Z-1310).